Reading from the N-terminus, the 88-residue chain is Small ribosomal subunit protein bS20 (88 aa).

Belongs to the bacterial ribosomal protein bS20 family.

In terms of biological role, binds directly to 16S ribosomal RNA. This Coprothermobacter proteolyticus (strain ATCC 35245 / DSM 5265 / OCM 4 / BT) protein is Small ribosomal subunit protein bS20.